Here is a 290-residue protein sequence, read N- to C-terminus: Probable proteasome subunit beta type-6 (290 aa).

This sequence belongs to the peptidase T1B family. In terms of assembly, the 26S proteasome consists of a 20S proteasome core and two 19S regulatory subunits. The 20S proteasome core is composed of 28 subunits that are arranged in four stacked rings, resulting in a barrel-shaped structure. The two end rings are each formed by seven alpha subunits, and the two central rings are each formed by seven beta subunits. The catalytic chamber with the active sites is on the inside of the barrel.

The protein resides in the cytoplasm. It localises to the nucleus. Its function is as follows. Non-catalytic component of the proteasome which degrades poly-ubiquitinated proteins in the cytoplasm and in the nucleus. It is essential for the regulated turnover of proteins and for the removal of misfolded proteins. The proteasome is a multicatalytic proteinase complex that is characterized by its ability to cleave peptides with Arg, Phe, Tyr, Leu, and Glu adjacent to the leaving group at neutral or slightly basic pH. It has an ATP-dependent proteolytic activity. The sequence is that of Probable proteasome subunit beta type-6 (PRE7) from Encephalitozoon cuniculi (strain GB-M1) (Microsporidian parasite).